Consider the following 20-residue polypeptide: Putative serine protease (20 aa).

The protein belongs to the peptidase S1 family.

The protein localises to the secreted. Functionally, binds the A.niger cell wall component alpha-1,3-glucan, a fungal pathogen-associated molecular pattern (PAMP) that activates the host immune response. The polypeptide is Putative serine protease (Galleria mellonella (Greater wax moth)).